Here is a 368-residue protein sequence, read N- to C-terminus: Glutamate 5-kinase (368 aa).

Lys12 is a binding site for ATP. Positions 52, 139, and 151 each coordinate substrate. ATP-binding positions include 171-172 (SD) and 213-219 (TGGMKTK). Residues 277–354 (KGALIIDDGA…KEIEKLLGYI (78 aa)) enclose the PUA domain.

It belongs to the glutamate 5-kinase family.

It localises to the cytoplasm. It catalyses the reaction L-glutamate + ATP = L-glutamyl 5-phosphate + ADP. It functions in the pathway amino-acid biosynthesis; L-proline biosynthesis; L-glutamate 5-semialdehyde from L-glutamate: step 1/2. Functionally, catalyzes the transfer of a phosphate group to glutamate to form L-glutamate 5-phosphate. The sequence is that of Glutamate 5-kinase from Pelagibacter ubique (strain HTCC1062).